We begin with the raw amino-acid sequence, 312 residues long: Ribose-phosphate pyrophosphokinase (312 aa).

Residues 38 to 40 (DGE) and 97 to 98 (RQ) each bind ATP. Mg(2+) is bound by residues His131 and Asp170. Lys193 is an active-site residue. D-ribose 5-phosphate contacts are provided by residues Arg195, Asp219, and 223 to 227 (DTAGT).

Belongs to the ribose-phosphate pyrophosphokinase family. Class I subfamily. As to quaternary structure, homohexamer. The cofactor is Mg(2+).

The protein localises to the cytoplasm. It carries out the reaction D-ribose 5-phosphate + ATP = 5-phospho-alpha-D-ribose 1-diphosphate + AMP + H(+). Its pathway is metabolic intermediate biosynthesis; 5-phospho-alpha-D-ribose 1-diphosphate biosynthesis; 5-phospho-alpha-D-ribose 1-diphosphate from D-ribose 5-phosphate (route I): step 1/1. Functionally, involved in the biosynthesis of the central metabolite phospho-alpha-D-ribosyl-1-pyrophosphate (PRPP) via the transfer of pyrophosphoryl group from ATP to 1-hydroxyl of ribose-5-phosphate (Rib-5-P). This is Ribose-phosphate pyrophosphokinase from Leptospira interrogans serogroup Icterohaemorrhagiae serovar copenhageni (strain Fiocruz L1-130).